A 116-amino-acid polypeptide reads, in one-letter code: Nascent polypeptide-associated complex protein (116 aa).

The region spanning P6–K70 is the NAC-A/B domain.

This sequence belongs to the NAC-alpha family. Homodimer. Interacts with the ribosome. Binds ribosomal RNA.

Contacts the emerging nascent chain on the ribosome. The chain is Nascent polypeptide-associated complex protein from Sulfolobus acidocaldarius (strain ATCC 33909 / DSM 639 / JCM 8929 / NBRC 15157 / NCIMB 11770).